We begin with the raw amino-acid sequence, 314 residues long: Small ribosomal subunit biogenesis GTPase RsgA (314 aa).

Residues 78–238 (SEIFREKLIA…IIDSPGFQEF (161 aa)) enclose the CP-type G domain. GTP contacts are provided by residues 127-130 (NKID) and 180-188 (GQSGVGKST). The Zn(2+) site is built by cysteine 262, cysteine 267, histidine 269, and cysteine 275.

It belongs to the TRAFAC class YlqF/YawG GTPase family. RsgA subfamily. As to quaternary structure, monomer. Associates with 30S ribosomal subunit, binds 16S rRNA. Requires Zn(2+) as cofactor.

The protein localises to the cytoplasm. One of several proteins that assist in the late maturation steps of the functional core of the 30S ribosomal subunit. Helps release RbfA from mature subunits. May play a role in the assembly of ribosomal proteins into the subunit. Circularly permuted GTPase that catalyzes slow GTP hydrolysis, GTPase activity is stimulated by the 30S ribosomal subunit. The polypeptide is Small ribosomal subunit biogenesis GTPase RsgA (Nitrosomonas europaea (strain ATCC 19718 / CIP 103999 / KCTC 2705 / NBRC 14298)).